The following is a 346-amino-acid chain: tRNA N6-adenosine threonylcarbamoyltransferase (346 aa).

His-111 and His-115 together coordinate Fe cation. Substrate is bound by residues 134 to 138, Asp-167, Gly-180, and Asn-277; that span reads LVSGG. Asp-305 is a Fe cation binding site.

It belongs to the KAE1 / TsaD family. Fe(2+) is required as a cofactor.

It localises to the cytoplasm. It catalyses the reaction L-threonylcarbamoyladenylate + adenosine(37) in tRNA = N(6)-L-threonylcarbamoyladenosine(37) in tRNA + AMP + H(+). Functionally, required for the formation of a threonylcarbamoyl group on adenosine at position 37 (t(6)A37) in tRNAs that read codons beginning with adenine. Is involved in the transfer of the threonylcarbamoyl moiety of threonylcarbamoyl-AMP (TC-AMP) to the N6 group of A37, together with TsaE and TsaB. TsaD likely plays a direct catalytic role in this reaction. The chain is tRNA N6-adenosine threonylcarbamoyltransferase from Bordetella bronchiseptica (strain ATCC BAA-588 / NCTC 13252 / RB50) (Alcaligenes bronchisepticus).